We begin with the raw amino-acid sequence, 473 residues long: H(+)/Cl(-) exchange transporter ClcA (473 aa).

Residues 1 to 32 (MKTDTSTFLAQQIVRLRRRDQIRRLMQRDKTP) are Cytoplasmic-facing. A helical transmembrane segment spans residues 33 to 69 (LAILFMAAVVGTLTGLVGVAFEKAVSWVQNMRIGALV). The Periplasmic portion of the chain corresponds to 70–76 (QVADHAF). The helical transmembrane segment at 77–100 (LLWPLAFILSALLAMVGYFLVRKF) threads the bilayer. Positions 106–110 (GSGIP) match the Selectivity filter part_1 motif. Ser107 contacts chloride. The helical intramembrane region spans 109 to 116 (IPEIEGAL). Residues 117–123 (EELRPVR) lie on the Cytoplasmic side of the membrane. Transmembrane regions (helical) follow at residues 124-141 (WWRV…TLGA) and 148-166 (EGPT…LDVF). A Selectivity filter part_2 motif is present at residues 146–150 (GREGP). At 167–176 (RMRSAEARHT) the chain is on the cytoplasmic side. 2 consecutive intramembrane regions (helical) follow at residues 177-189 (LLAT…LSAA) and 193-201 (PLAGILFII). Residues 202-214 (EEMRPQFRYNLIS) are Cytoplasmic-facing. The chain crosses the membrane as a helical span at residues 215-232 (IKAVFTGVIMSSIVFRIF). Residues 233–252 (NGEAPIIEVGKLSDAPVNTL) are Periplasmic-facing. A helical membrane pass occupies residues 253–281 (WLYLILGIIFGCVGPVFNSLVLRTQDMFQ). The Cytoplasmic segment spans residues 282-287 (RFHGGE). Residues 288-309 (IKKWVLMGGAIGGLCGILGLIE) form a helical membrane-spanning segment. Residues 310 to 329 (PEAAGGGFNLIPIAAAGNFS) lie on the Periplasmic side of the membrane. Transmembrane regions (helical) follow at residues 330 to 349 (VGLL…LCFS) and 355 to 376 (GIFA…MAAA). The Selectivity filter part_3 motif lies at 355–359 (GIFAP). Residues Ile356 and Phe357 each contribute to the chloride site. Topologically, residues 377–386 (VLFPQYHLEA) are periplasmic. The helical intramembrane region spans 387 to 401 (GTFAIAGMGALMAAS). The note=Loop between two helices intramembrane region spans 402–404 (VRA). Positions 405–416 (PLTGIVLVLEMT) form an intramembrane region, helical. The segment at residues 417-421 (DNYQL) is an intramembrane region (note=Loop between two helices). The chain crosses the membrane as a helical span at residues 422 to 438 (ILPMIITCLGATLLAQF). The Cytoplasmic portion of the chain corresponds to 439–473 (LGGKPLYSTILARTLAKQDAEQAAKNQNASAGENT). Tyr445 is a chloride binding site.

The protein belongs to the chloride channel (TC 2.A.49) family. ClcA subfamily. As to quaternary structure, homodimer.

Its subcellular location is the cell inner membrane. The enzyme catalyses 2 chloride(in) + H(+)(out) = 2 chloride(out) + H(+)(in). In terms of biological role, proton-coupled chloride transporter. Functions as antiport system and exchanges two chloride ions for 1 proton. Probably acts as an electrical shunt for an outwardly-directed proton pump that is linked to amino acid decarboxylation, as part of the extreme acid resistance (XAR) response. In Salmonella choleraesuis (strain SC-B67), this protein is H(+)/Cl(-) exchange transporter ClcA.